A 401-amino-acid polypeptide reads, in one-letter code: Deubiquitinase and deneddylase Dub1 (401 aa).

Polar residues predominate over residues 1–11; that stretch reads MLSPTNSTSKT. Residues 1 to 24 are disordered; sequence MLSPTNSTSKTAPVPPRDSSKPVL. The helical transmembrane segment at 40–60 threads the bilayer; sequence TALAVLLVVVTLGLILLFYSF. A disordered region spans residues 77–130; it reads KEQPTISIPVPLPSPPLAVPRPSTPPPPVISRPSTPSAPKPSTPPPLLPKAPKP. Positions 86 to 128 are enriched in pro residues; the sequence is VPLPSPPLAVPRPSTPPPPVISRPSTPSAPKPSTPPPLLPKAP. Active-site residues include His275, Asp292, and Cys345.

The protein belongs to the peptidase C48 family. Binds to host NFKBIA.

It localises to the secreted. The protein localises to the host cell. The protein resides in the membrane. Functionally, effector proteins function to alter host cell physiology and promote bacterial survival in host tissues. This protease possesses deubiquitinating and deneddylating activities. Impairs ubiquitination and degradation of NF-kappa-B inhibitor alpha (NFKBIA), thereby preventing NF-kappa-B activation. This is Deubiquitinase and deneddylase Dub1 (cdu1) from Chlamydia trachomatis serovar L2 (strain ATCC VR-902B / DSM 19102 / 434/Bu).